The primary structure comprises 247 residues: 4-nitrobenzoate reductase (247 aa).

Arg-29 to Arg-33 contacts FMN. NADP(+) contacts are provided by Ser-59, Arg-112, Tyr-120, and Leu-126. Arg-232 contributes to the FMN binding site.

This sequence belongs to the nitroreductase family. Requires FMN as cofactor.

The enzyme catalyses 4-nitrobenzoate + 2 NADPH + 2 H(+) = 4-hydroxylaminobenzoate + 2 NADP(+) + H2O. Its function is as follows. Nitroreductase involved in the degradation of nitroaromatic compounds. Catalyzes the conversion of 4-nitrobenzoate to 4-hydroxylaminobenzoate. The sequence is that of 4-nitrobenzoate reductase from Nocardioides sp. (strain LMS-CY).